Reading from the N-terminus, the 139-residue chain is Small ribosomal subunit protein uS12m (139 aa).

Residues 1-21 (MLSTLYQNDLKKKRNRRRNRS) are disordered. A compositionally biased stretch (basic residues) spans 11–20 (KKKRNRRRNR).

It belongs to the universal ribosomal protein uS12 family.

The protein localises to the mitochondrion. Functionally, protein S12 is involved in the translation initiation step. In Paramecium tetraurelia, this protein is Small ribosomal subunit protein uS12m (RPS12).